An 83-amino-acid chain; its full sequence is Translational regulator CsrA (83 aa).

This sequence belongs to the CsrA/RsmA family. As to quaternary structure, homodimer; the beta-strands of each monomer intercalate to form a hydrophobic core, while the alpha-helices form wings that extend away from the core.

It is found in the cytoplasm. A translational regulator that binds mRNA to regulate translation initiation and/or mRNA stability. Usually binds in the 5'-UTR at or near the Shine-Dalgarno sequence preventing ribosome-binding, thus repressing translation. Its main target seems to be the major flagellin gene, while its function is anatagonized by FliW. In Nocardioides sp. (strain ATCC BAA-499 / JS614), this protein is Translational regulator CsrA.